Reading from the N-terminus, the 230-residue chain is Large ribosomal subunit protein uL1 (230 aa).

It belongs to the universal ribosomal protein uL1 family. In terms of assembly, part of the 50S ribosomal subunit.

Binds directly to 23S rRNA. The L1 stalk is quite mobile in the ribosome, and is involved in E site tRNA release. Its function is as follows. Protein L1 is also a translational repressor protein, it controls the translation of the L11 operon by binding to its mRNA. The sequence is that of Large ribosomal subunit protein uL1 from Gluconobacter oxydans (strain 621H) (Gluconobacter suboxydans).